Consider the following 710-residue polypeptide: mRNA export factor crp79 (710 aa).

RRM domains are found at residues isoleucine 19–isoleucine 102 and histidine 222–proline 292. The segment covering glutamine 333–histidine 348 has biased composition (polar residues). Positions glutamine 333–lysine 357 are disordered. The region spanning glutamate 401–phenylalanine 474 is the RRM 3 domain. Polar residues predominate over residues threonine 502–lysine 524. The disordered stretch occupies residues threonine 502–glutamate 544. Positions valine 525–glutamate 538 are enriched in basic and acidic residues.

The protein resides in the cytoplasm. Its subcellular location is the nucleus. In terms of biological role, binds the poly(A) tail of mRNA. Involved in the export of mRNA from the nucleus to the cytoplasm. The protein is mRNA export factor crp79 (crp79) of Schizosaccharomyces pombe (strain 972 / ATCC 24843) (Fission yeast).